We begin with the raw amino-acid sequence, 89 residues long: UPF0237 protein CPE1496 (89 aa).

One can recognise an ACT domain in the interval valine 4–asparagine 84.

Belongs to the UPF0237 family.

This Clostridium perfringens (strain 13 / Type A) protein is UPF0237 protein CPE1496.